The sequence spans 397 residues: Serpin B10 (397 aa).

Positions Lys74–Lys77 match the Nuclear localization signal motif.

This sequence belongs to the serpin family. Ov-serpin subfamily. In terms of tissue distribution, expressed in many tissues, including brain, heart, kidney, liver, lung, prostate, skin, spleen and stomach.

It localises to the nucleus. Its subcellular location is the cytoplasm. Protease inhibitor that may play a role in the regulation of protease activities during hematopoiesis and apoptosis induced by TNF. May regulate protease activities in the cytoplasm and in the nucleus. Inhibits plasmin. The chain is Serpin B10 (Serpinb10) from Rattus norvegicus (Rat).